A 505-amino-acid polypeptide reads, in one-letter code: Protein disulfide-isomerase A3 (505 aa).

An N-terminal signal peptide occupies residues 1–24 (MSVPRPSRAALLLLVPLLALSAGA). 2 consecutive Thioredoxin domains span residues 25-131 (SDVV…KQAG) and 341-483 (SRDG…REAT). Catalysis depends on nucleophile residues Cys55 and Cys58. 3 disulfides stabilise this stretch: Cys55–Cys58, Cys83–Cys90, and Cys404–Cys407. Catalysis depends on nucleophile residues Cys404 and Cys407. Residues 486 to 505 (PVLQEEDKAKKSKKKAKEDL) form a disordered region. A compositionally biased stretch (basic residues) spans 495–505 (KKSKKKAKEDL). The Prevents secretion from ER motif lies at 502–505 (KEDL).

This sequence belongs to the protein disulfide isomerase family.

The protein resides in the endoplasmic reticulum. It is found in the endoplasmic reticulum lumen. Its subcellular location is the melanosome. The catalysed reaction is Catalyzes the rearrangement of -S-S- bonds in proteins.. Protein disulfide isomerase that catalyzes the formation, isomerization, and reduction or oxidation of disulfide bonds in client proteins and functions as a protein folding chaperone. The sequence is that of Protein disulfide-isomerase A3 (PDIA3) from Gallus gallus (Chicken).